The sequence spans 328 residues: DNA-directed RNA polymerase subunit alpha (328 aa).

Positions 1–234 (MQGSVTEFLK…EQLDAFVDLR (234 aa)) are alpha N-terminal domain (alpha-NTD). Positions 248–328 (FXPILLRPVD…NWPPASIAED (81 aa)) are alpha C-terminal domain (alpha-CTD).

Belongs to the RNA polymerase alpha chain family. Homodimer. The RNAP catalytic core consists of 2 alpha, 1 beta, 1 beta' and 1 omega subunit. When a sigma factor is associated with the core the holoenzyme is formed, which can initiate transcription.

The enzyme catalyses RNA(n) + a ribonucleoside 5'-triphosphate = RNA(n+1) + diphosphate. DNA-dependent RNA polymerase catalyzes the transcription of DNA into RNA using the four ribonucleoside triphosphates as substrates. This is DNA-directed RNA polymerase subunit alpha from Haemophilus influenzae (strain ATCC 51907 / DSM 11121 / KW20 / Rd).